We begin with the raw amino-acid sequence, 258 residues long: Type III pantothenate kinase (258 aa).

6-13 contributes to the ATP binding site; sequence DVGNTNTV. Substrate is bound by residues Y100 and 107–110; that span reads GADR. D109 serves as the catalytic Proton acceptor. D129 serves as a coordination point for K(+). Residue T132 participates in ATP binding. T184 serves as a coordination point for substrate.

Belongs to the type III pantothenate kinase family. In terms of assembly, homodimer. NH4(+) serves as cofactor. Requires K(+) as cofactor.

It localises to the cytoplasm. The enzyme catalyses (R)-pantothenate + ATP = (R)-4'-phosphopantothenate + ADP + H(+). The protein operates within cofactor biosynthesis; coenzyme A biosynthesis; CoA from (R)-pantothenate: step 1/5. In terms of biological role, catalyzes the phosphorylation of pantothenate (Pan), the first step in CoA biosynthesis. In Geobacillus thermodenitrificans (strain NG80-2), this protein is Type III pantothenate kinase.